Here is a 329-residue protein sequence, read N- to C-terminus: BRISC and BRCA1-A complex member 1 (329 aa).

At M1 the chain carries N-acetylmethionine. Positions 1 to 84 (MEVAEPSSPT…VPPPAPEVQI (84 aa)) are disordered. A Phosphoserine modification is found at S8. Over residues 10–19 (TEEEEEEEEH) the composition is skewed to acidic residues. Phosphoserine occurs at positions 29, 49, 57, and 62. T65 is subject to Phosphothreonine. At S66 the chain carries Phosphoserine. Residues 95–298 (VIICLDLSEE…LELHNCMAKL (204 aa)) are VWFA-like.

This sequence belongs to the BABAM1 family. As to quaternary structure, component of the ARISC complex, at least composed of UIMC1/RAP80, ABRAXAS1, BRCC3/BRCC36, BABAM2 and BABAM1/NBA1. Component of the BRCA1-A complex, at least composed of BRCA1, BARD1, UIMC1/RAP80, ABRAXAS1, BRCC3/BRCC36, BABAM2 and BABAM1/NBA1. In the BRCA1-A complex, interacts directly with ABRAXAS1 and BABAM2. Component of the BRISC complex, at least composed of ABRAXAS2, BRCC3/BRCC36, BABAM2 and BABAM1/NBA1. Identified in a complex with SHMT2 and the other subunits of the BRISC complex.

The protein localises to the cytoplasm. It localises to the nucleus. In terms of biological role, component of the BRCA1-A complex, a complex that specifically recognizes 'Lys-63'-linked ubiquitinated histones H2A and H2AX at DNA lesions sites, leading to target the BRCA1-BARD1 heterodimer to sites of DNA damage at double-strand breaks (DSBs). The BRCA1-A complex also possesses deubiquitinase activity that specifically removes 'Lys-63'-linked ubiquitin on histones H2A and H2AX. In the BRCA1-A complex, it is required for the complex integrity and its localization at DSBs. Component of the BRISC complex, a multiprotein complex that specifically cleaves 'Lys-63'-linked ubiquitin in various substrates. In these 2 complexes, it is probably required to maintain the stability of BABAM2 and help the 'Lys-63'-linked deubiquitinase activity mediated by BRCC3/BRCC36 component. The BRISC complex is required for normal mitotic spindle assembly and microtubule attachment to kinetochores via its role in deubiquitinating NUMA1. Plays a role in interferon signaling via its role in the deubiquitination of the interferon receptor IFNAR1; deubiquitination increases IFNAR1 activity by enhancing its stability and cell surface expression. Down-regulates the response to bacterial lipopolysaccharide (LPS) via its role in IFNAR1 deubiquitination. This is BRISC and BRCA1-A complex member 1 (BABAM1) from Homo sapiens (Human).